The sequence spans 211 residues: Small ribosomal subunit protein uS3 (211 aa).

The 70-residue stretch at 16–85 (IDEYFKGKLV…NPQIEVKPLE (70 aa)) folds into the KH type-2 domain.

The protein belongs to the universal ribosomal protein uS3 family. In terms of assembly, part of the 30S ribosomal subunit.

Functionally, binds the lower part of the 30S subunit head. The polypeptide is Small ribosomal subunit protein uS3 (Methanococcus vannielii (strain ATCC 35089 / DSM 1224 / JCM 13029 / OCM 148 / SB)).